Reading from the N-terminus, the 784-residue chain is ATP-dependent 6-phosphofructokinase, platelet type (784 aa).

Residue Met1 is modified to N-acetylmethionine. Positions Met1–Ile399 are N-terminal catalytic PFK domain 1. A phosphoserine mark is found at Ser6, Ser12, and Ser21. Residues Gly34, Arg97–Cys98, and Gly127–Ser130 each bind ATP. Asp128 provides a ligand contact to Mg(2+). Ser142 carries the phosphoserine modification. Residues Ser173–Asp175, Arg210, Met217–Arg219, Glu273, Arg301, and His307–Arg310 each bind substrate. Asp175 acts as the Proton acceptor in catalysis. A Phosphoserine modification is found at Ser386. Residue Lys395 is modified to N6-acetyllysine. The interval Lys400 to Cys411 is interdomain linker. A C-terminal regulatory PFK domain 2 region spans residues Asn412–Val784. Arg481 is a binding site for beta-D-fructose 2,6-bisphosphate. Residue Lys486 is modified to N6-acetyllysine. Residues Thr538–Asn542, Arg576, Met583–Gly585, and Glu639 each bind beta-D-fructose 2,6-bisphosphate. Ser540 carries O-linked (GlcNAc) serine glycosylation. The residue at position 651 (Tyr651) is a Phosphotyrosine. Residues Arg665 and His671–Gln674 contribute to the beta-D-fructose 2,6-bisphosphate site. Lys688 carries the N6-acetyllysine modification. Arg744 contacts beta-D-fructose 2,6-bisphosphate. Position 783 is a phosphoserine (Ser783).

It belongs to the phosphofructokinase type A (PFKA) family. ATP-dependent PFK group I subfamily. Eukaryotic two domain clade 'E' sub-subfamily. In terms of assembly, homo- and heterotetramers. Phosphofructokinase (PFK) enzyme functions as a tetramer composed of different combinations of 3 types of subunits, called PFKM (where M stands for Muscle), PFKL (Liver) and PFKP (Platelet). The composition of the PFK tetramer differs according to the tissue type it is present in. In muscles, it is composed of 4 PFKM subunits (also called M4). In the liver, the predominant form is a tetramer of PFKL subunits (L4). In erythrocytes, both PFKM and PFKL subunits randomly tetramerize to form M4, L4 and other combinations (ML3, M2L2, M3L). In platelets, brain and fibroblasts, PFK contains a higher proportion of PFKP subunits. The kinetic and regulatory properties of the tetrameric enzyme are dependent on the subunit composition, hence can vary across tissues. Interacts with ATG4B; promoting phosphorylation of ATG4B. Mg(2+) serves as cofactor. In terms of processing, phosphorylation at Ser-386 promotes interaction with ATG4B. GlcNAcylation decreases enzyme activity.

Its subcellular location is the cytoplasm. It carries out the reaction beta-D-fructose 6-phosphate + ATP = beta-D-fructose 1,6-bisphosphate + ADP + H(+). It participates in carbohydrate degradation; glycolysis; D-glyceraldehyde 3-phosphate and glycerone phosphate from D-glucose: step 3/4. Its activity is regulated as follows. Allosterically activated by ADP, AMP, or fructose 2,6-bisphosphate, and allosterically inhibited by ATP or citrate. In terms of biological role, catalyzes the phosphorylation of D-fructose 6-phosphate to fructose 1,6-bisphosphate by ATP, the first committing step of glycolysis. This is ATP-dependent 6-phosphofructokinase, platelet type (PFKP) from Homo sapiens (Human).